Reading from the N-terminus, the 701-residue chain is Pentatricopeptide repeat-containing protein At5g50390, chloroplastic (701 aa).

Residues 1 to 47 (MEIPLSRYQSIRLDEIRDSSSNPKVLTFPRKFSLRGRRWKNPFGRLS) constitute a chloroplast transit peptide. PPR repeat units follow at residues 86–116 (SGVT…LEIR), 122–156 (GVST…GFEP), 157–187 (EQYM…IPER), 188–218 (NLYS…MWEE), 223–257 (ETHT…GVVD), 258–288 (NTFV…MPEK), 289–323 (TTVA…GVSI), 324–358 (DQFT…GFES), 359–389 (EIVA…LPRK), 390–424 (NIIS…NVAP), 425–460 (NHVT…GIKP), and 461–491 (RAMH…APLK). Positions 496-571 (MWAALLNACR…MPACTWVEVG (76 aa)) are type E motif. The interval 572–606 (DQTHSFLSGDRFDSYNETVKRQIYQKVDELMEEIS) is type E(+) motif; degenerate. The segment at 607 to 701 (EYGYSEEEQH…EGKCSCGGYW (95 aa)) is type DYW motif.

The protein belongs to the PPR family. PCMP-H subfamily.

It localises to the plastid. It is found in the chloroplast. The protein is Pentatricopeptide repeat-containing protein At5g50390, chloroplastic (PCMP-H58) of Arabidopsis thaliana (Mouse-ear cress).